Reading from the N-terminus, the 363-residue chain is Phospho-N-acetylmuramoyl-pentapeptide-transferase (363 aa).

Transmembrane regions (helical) follow at residues 27-47 (SGCA…PFIA), 76-96 (TMGG…WADL), 97-117 (TNGF…VGFA), 137-157 (LGCE…LTPP), 171-191 (VLLP…TGFG), 202-222 (GLAI…SYLV), 242-262 (LAVF…FNAP), 265-285 (AVFM…AVAV), 292-312 (VLCI…IQIF), and 340-360 (KIVI…LATL).

It belongs to the glycosyltransferase 4 family. MraY subfamily. Mg(2+) is required as a cofactor.

Its subcellular location is the cell inner membrane. It catalyses the reaction UDP-N-acetyl-alpha-D-muramoyl-L-alanyl-gamma-D-glutamyl-meso-2,6-diaminopimeloyl-D-alanyl-D-alanine + di-trans,octa-cis-undecaprenyl phosphate = di-trans,octa-cis-undecaprenyl diphospho-N-acetyl-alpha-D-muramoyl-L-alanyl-D-glutamyl-meso-2,6-diaminopimeloyl-D-alanyl-D-alanine + UMP. Its pathway is cell wall biogenesis; peptidoglycan biosynthesis. Catalyzes the initial step of the lipid cycle reactions in the biosynthesis of the cell wall peptidoglycan: transfers peptidoglycan precursor phospho-MurNAc-pentapeptide from UDP-MurNAc-pentapeptide onto the lipid carrier undecaprenyl phosphate, yielding undecaprenyl-pyrophosphoryl-MurNAc-pentapeptide, known as lipid I. This is Phospho-N-acetylmuramoyl-pentapeptide-transferase from Gluconobacter oxydans (strain 621H) (Gluconobacter suboxydans).